A 237-amino-acid chain; its full sequence is Neurogenin-1 (237 aa).

Positions 35-83 (LQQAASASGPPAPARRGAPNISRASEVPGAQDDEQERRRRRGRTRVRSE) are disordered. The span at 38-53 (AASASGPPAPARRGAP) shows a compositional bias: low complexity. The bHLH domain occupies 92-144 (SRRVKANDRERNRMHNLNAALDALRSVLPSFPDDTKLTKIETLRFAYNYIWAL). The interval 175 to 209 (GPPSPASDAESWGSGAAAASPLSDPSSPAASEDFT) is disordered. Residues 180-207 (ASDAESWGSGAAAASPLSDPSSPAASED) are compositionally biased toward low complexity.

As to quaternary structure, efficient DNA binding requires dimerization with another bHLH protein. Expression restricted to the embryonic nervous system.

The protein localises to the nucleus. In terms of biological role, acts as a transcriptional regulator. Involved in the initiation of neuronal differentiation. Activates transcription by binding to the E box (5'-CANNTG-3'). Associates with chromatin to enhancer regulatory elements in genes encoding key transcriptional regulators of neurogenesis. The protein is Neurogenin-1 (NEUROG1) of Homo sapiens (Human).